The following is an 85-amino-acid chain: Selenoprotein W (85 aa).

Positions 10 to 13 form a cross-link, cysteinyl-selenocysteine (Cys-Sec); redox-active; the sequence is CGAU. Residue U13 is a non-standard amino acid, selenocysteine.

This sequence belongs to the SelWTH family. Selenoprotein W subfamily. Expressed ubiquitously with predominant expression in the pituitary, spinal cord, sciatic nerve, cerebral cortex, cerebral nuclei, thalamus, cerebellum, muscle, cartilage, trachea, gizzard and artery. Weakly expressed in pancreas, testis, ovary, kidney and veins.

The protein resides in the cytoplasm. In terms of biological role, plays a role as a glutathione (GSH)-dependent antioxidant. May be involved in a redox-related process. May play a role in the myopathies of selenium deficiency. This chain is Selenoprotein W, found in Gallus gallus (Chicken).